The chain runs to 285 residues: 1,4-dihydroxy-2-naphthoyl-CoA synthase (285 aa).

Residues R45, 84-88 (AGGDQ), Y97, 129-133 (YSIGG), T155, S161, Y258, and K273 each bind substrate. Position 154–156 (154–156 (QTG)) interacts with hydrogencarbonate.

The protein belongs to the enoyl-CoA hydratase/isomerase family. MenB subfamily. In terms of assembly, homohexamer. Requires hydrogencarbonate as cofactor.

It catalyses the reaction 2-succinylbenzoyl-CoA + H(+) = 1,4-dihydroxy-2-naphthoyl-CoA + H2O. The protein operates within quinol/quinone metabolism; 1,4-dihydroxy-2-naphthoate biosynthesis; 1,4-dihydroxy-2-naphthoate from chorismate: step 6/7. It functions in the pathway quinol/quinone metabolism; menaquinone biosynthesis. Its function is as follows. Converts o-succinylbenzoyl-CoA (OSB-CoA) to 1,4-dihydroxy-2-naphthoyl-CoA (DHNA-CoA). The chain is 1,4-dihydroxy-2-naphthoyl-CoA synthase from Salmonella typhimurium (strain LT2 / SGSC1412 / ATCC 700720).